The sequence spans 345 residues: AA9 family lytic polysaccharide monooxygenase D (345 aa).

Residues 1–21 form the signal peptide; sequence MPSFTSKTLLAALAGAAAVNA. Positions 22 and 107 each coordinate Cu(2+). Cysteines 77 and 200 form a disulfide. N-linked (GlcNAc...) asparagine glycosylation occurs at Asn160. O2 is bound by residues His186 and Gln195. Cu(2+) is bound at residue Tyr197. A disordered region spans residues 315–345; the sequence is VQTSTRPISTRPQPTRCPGLGRRHLRKVARA. Positions 318-327 are enriched in polar residues; it reads STRPISTRPQ. The span at 335–345 shows a compositional bias: basic residues; that stretch reads GRRHLRKVARA.

It belongs to the polysaccharide monooxygenase AA9 family. Requires Cu(2+) as cofactor.

It is found in the secreted. It carries out the reaction [(1-&gt;4)-beta-D-glucosyl]n+m + reduced acceptor + O2 = 4-dehydro-beta-D-glucosyl-[(1-&gt;4)-beta-D-glucosyl]n-1 + [(1-&gt;4)-beta-D-glucosyl]m + acceptor + H2O.. Functionally, lytic polysaccharide monooxygenase (LPMO) that depolymerizes crystalline and amorphous polysaccharides via the oxidation of scissile alpha- or beta-(1-4)-glycosidic bonds, yielding C1 or C4 oxidation products. Catalysis by LPMOs requires the reduction of the active-site copper from Cu(II) to Cu(I) by a reducing agent and H(2)O(2) or O(2) as a cosubstrate. The sequence is that of AA9 family lytic polysaccharide monooxygenase D from Podospora anserina (strain S / ATCC MYA-4624 / DSM 980 / FGSC 10383) (Pleurage anserina).